Consider the following 510-residue polypeptide: G-protein coupled receptor dmsr-1 (510 aa).

The Extracellular portion of the chain corresponds to 1–35; the sequence is MEFTECKTTFIHLPDKSFLYDVFVSVYNFYHPIHA. Residues 36–56 form a helical membrane-spanning segment; the sequence is YLSIFLCVLGTIANFCNIVVL. Residues 57–64 lie on the Cytoplasmic side of the membrane; the sequence is TRRTMRTP. A helical membrane pass occupies residues 65-85; sequence VNMILTAMASCDTVVLFSNLI. Residues 86-107 lie on the Extracellular side of the membrane; that stretch reads YTTHYSFVAFKFCHPKHWSYSW. The helical transmembrane segment at 108–128 threads the bilayer; it reads ALFLIAHAHLSLVAHSSSVWL. Over 129–155 the chain is Cytoplasmic; that stretch reads SVMLALVRYVTLRSRGNMGGMQVTLRH. The chain crosses the membrane as a helical span at residues 156–176; the sequence is SYYAVAVTVSLVAVLNAPNFL. Residues 177 to 223 are Extracellular-facing; sequence NYKINEQPLNETCTDLDPMFWNSPAYLPGIADIAKANSCLVFRLSYW. Asn186 is a glycosylation site (N-linked (GlcNAc...) asparagine). Residues 224-244 traverse the membrane as a helical segment; the sequence is ISGMVFKVLPCALLSLFVWLL. Residues 245-307 lie on the Cytoplasmic side of the membrane; it reads LRILREVREN…GERVDRTTHM (63 aa). The chain crosses the membrane as a helical span at residues 308 to 328; the sequence is LLAIVAVMLVTELPQGIMAVL. Residues 329–343 lie on the Extracellular side of the membrane; the sequence is SGMCSEEFRIYIYNN. The helical transmembrane segment at 344 to 364 threads the bilayer; it reads LGDILDLFSLCGSCCSFIIYC. Residues 365–510 are Cytoplasmic-facing; that stretch reads SMSGQFRNEF…DGIRGHFQNI (146 aa). Residues 452–510 are disordered; it reads GCDSITPCSPMPTSFPSSPLPPIRSGEDESTDETSHLLNSSGPNSTASADGIRGHFQNI. A compositionally biased stretch (polar residues) spans 487–499; sequence HLLNSSGPNSTAS.

Belongs to the G-protein coupled receptor 1 family. Expressed in head neurons including the RID neuron and the paired AIY neurons, and in tail neurons including the paired PHA and PHB neurons. Not expressed in AVE and AVA neurons.

Its subcellular location is the cell membrane. Its function is as follows. G-protein coupled receptor. In terms of biological role, G-protein coupled receptor for flp-13 RFamide neuropeptides in vitro. Upon activation by flp-13 RFamide neuropeptides, promotes sleep in response to cellular stress also known as stress-induced sleep (SIS), probably by inhibiting the activity of wake-promoting neurons. This is G-protein coupled receptor dmsr-1 from Caenorhabditis elegans.